A 158-amino-acid polypeptide reads, in one-letter code: Glycine/sarcosine/betaine reductase complex component A (158 aa).

The active site involves U44. Position 44 (U44) is a non-standard amino acid, selenocysteine.

The protein belongs to the GrdA family. In terms of assembly, monomer. Component of the glycine, sarcosine and betaine reductase complexes, together with components B and C.

The enzyme catalyses acetyl phosphate + [thioredoxin]-disulfide + NH4(+) + H2O = [thioredoxin]-dithiol + glycine + phosphate + H(+). It catalyses the reaction acetyl phosphate + methylamine + [thioredoxin]-disulfide + H2O = sarcosine + [thioredoxin]-dithiol + phosphate + H(+). The catalysed reaction is acetyl phosphate + trimethylamine + [thioredoxin]-disulfide + H2O = glycine betaine + [thioredoxin]-dithiol + phosphate + H(+). In terms of biological role, in the first step of glycine, betaine and sarcosine reductases, the substrate is bound to component PB via a Schiff base intermediate. Then the PB-activated substrate is nucleophilically attacked by the selenol anion of component PA to transform it to a carboxymethylated selenoether and the respective amine. By action of component PC, acetyl phosphate is formed, leaving component PA in its oxidized state. Finally component PA becomes reduced by the thioredoxin system to start a new catalytic cycle of reductive deamination. The sequence is that of Glycine/sarcosine/betaine reductase complex component A from Alkaliphilus metalliredigens (strain QYMF).